A 232-amino-acid polypeptide reads, in one-letter code: Pirin-like protein CC_1473 (232 aa).

Belongs to the pirin family.

The chain is Pirin-like protein CC_1473 from Caulobacter vibrioides (strain ATCC 19089 / CIP 103742 / CB 15) (Caulobacter crescentus).